Reading from the N-terminus, the 247-residue chain is Cell division protein ZapD (247 aa).

It belongs to the ZapD family. As to quaternary structure, interacts with FtsZ.

It is found in the cytoplasm. In terms of biological role, cell division factor that enhances FtsZ-ring assembly. Directly interacts with FtsZ and promotes bundling of FtsZ protofilaments, with a reduction in FtsZ GTPase activity. The protein is Cell division protein ZapD of Escherichia fergusonii (strain ATCC 35469 / DSM 13698 / CCUG 18766 / IAM 14443 / JCM 21226 / LMG 7866 / NBRC 102419 / NCTC 12128 / CDC 0568-73).